The chain runs to 286 residues: 4-hydroxybenzoate octaprenyltransferase (286 aa).

7 helical membrane passes run 22–42, 45–65, 98–118, 143–163, 213–233, 238–255, and 266–286; these read IGTL…EKAM, LSVL…GCVI, LFIV…LYTI, FFLG…TIEA, IIAL…YLSQ, YFIV…QCRL, and NAFL…LFGI.

The protein belongs to the UbiA prenyltransferase family. The cofactor is Mg(2+).

The protein resides in the cell inner membrane. The catalysed reaction is all-trans-octaprenyl diphosphate + 4-hydroxybenzoate = 4-hydroxy-3-(all-trans-octaprenyl)benzoate + diphosphate. It participates in cofactor biosynthesis; ubiquinone biosynthesis. Functionally, catalyzes the prenylation of para-hydroxybenzoate (PHB) with an all-trans polyprenyl group. Mediates the second step in the final reaction sequence of ubiquinone-8 (UQ-8) biosynthesis, which is the condensation of the polyisoprenoid side chain with PHB, generating the first membrane-bound Q intermediate 3-octaprenyl-4-hydroxybenzoate. This chain is 4-hydroxybenzoate octaprenyltransferase, found in Histophilus somni (strain 129Pt) (Haemophilus somnus).